A 310-amino-acid polypeptide reads, in one-letter code: Ribosomal RNA large subunit methyltransferase F (310 aa).

The protein belongs to the methyltransferase superfamily. METTL16/RlmF family.

The protein resides in the cytoplasm. It carries out the reaction adenosine(1618) in 23S rRNA + S-adenosyl-L-methionine = N(6)-methyladenosine(1618) in 23S rRNA + S-adenosyl-L-homocysteine + H(+). Specifically methylates the adenine in position 1618 of 23S rRNA. The polypeptide is Ribosomal RNA large subunit methyltransferase F (Psychromonas ingrahamii (strain DSM 17664 / CCUG 51855 / 37)).